A 239-amino-acid chain; its full sequence is tRNA (guanine-N(1)-)-methyltransferase (239 aa).

S-adenosyl-L-methionine contacts are provided by residues glycine 113 and 133–138 (IGDYVL). The tract at residues 218–239 (ERRPDLWAARATQNPPERKTNG) is disordered.

Belongs to the RNA methyltransferase TrmD family. In terms of assembly, homodimer.

It localises to the cytoplasm. It carries out the reaction guanosine(37) in tRNA + S-adenosyl-L-methionine = N(1)-methylguanosine(37) in tRNA + S-adenosyl-L-homocysteine + H(+). Its function is as follows. Specifically methylates guanosine-37 in various tRNAs. The sequence is that of tRNA (guanine-N(1)-)-methyltransferase from Nitrobacter winogradskyi (strain ATCC 25391 / DSM 10237 / CIP 104748 / NCIMB 11846 / Nb-255).